A 28-amino-acid chain; its full sequence is Omega-gliadin (28 aa).

Positions 1–28 are disordered; it reads ARQLNPSDQELQSPQQLYPQQPYPQQPY. Residues 9–20 show a composition bias toward low complexity; it reads QELQSPQQLYPQ.

The sequence is that of Omega-gliadin from Triticum monococcum (Einkorn wheat).